A 106-amino-acid chain; its full sequence is Aspartyl/glutamyl-tRNA(Asn/Gln) amidotransferase subunit C (106 aa).

Belongs to the GatC family. Heterotrimer of A, B and C subunits.

It carries out the reaction L-glutamyl-tRNA(Gln) + L-glutamine + ATP + H2O = L-glutaminyl-tRNA(Gln) + L-glutamate + ADP + phosphate + H(+). The enzyme catalyses L-aspartyl-tRNA(Asn) + L-glutamine + ATP + H2O = L-asparaginyl-tRNA(Asn) + L-glutamate + ADP + phosphate + 2 H(+). In terms of biological role, allows the formation of correctly charged Asn-tRNA(Asn) or Gln-tRNA(Gln) through the transamidation of misacylated Asp-tRNA(Asn) or Glu-tRNA(Gln) in organisms which lack either or both of asparaginyl-tRNA or glutaminyl-tRNA synthetases. The reaction takes place in the presence of glutamine and ATP through an activated phospho-Asp-tRNA(Asn) or phospho-Glu-tRNA(Gln). The polypeptide is Aspartyl/glutamyl-tRNA(Asn/Gln) amidotransferase subunit C (Lactiplantibacillus plantarum (strain ATCC BAA-793 / NCIMB 8826 / WCFS1) (Lactobacillus plantarum)).